A 678-amino-acid chain; its full sequence is Geranylgeranyl transferase type-2 subunit alpha 1 (678 aa).

PFTA repeat units follow at residues 40–74, 86–120, 121–155, 156–190, and 201–235; these read YTNE…DRLA, ILDE…KGHS, SVGN…LTNR, SEQD…SLLA, and KIPE…QTLN. 5 LRR repeats span residues 510–532, 533–554, 555–578, 580–604, and 638–663; these read MNNL…VEKL, LFVQ…LEAM, QLLS…SLRH, KQLK…RYLC, and DLNL…VLQV.

Belongs to the protein prenyltransferase subunit alpha family. As to quaternary structure, heterotrimer composed of the alpha subunit RGTA, the beta subunit RGTB and REP; within this trimer, RGTA and RGTB form the catalytic component, while REP mediates peptide substrate binding.

The catalysed reaction is geranylgeranyl diphosphate + L-cysteinyl-[protein] = S-geranylgeranyl-L-cysteinyl-[protein] + diphosphate. The enzymatic reaction requires the aid of the Rab escort protein REP. Its function is as follows. Catalyzes the transfer of a geranylgeranyl moiety from geranylgeranyl diphosphate to both cysteines of Rab proteins with the C-terminal sequence -CCXX, CXXX, -XCCX and -XCXC, such as RABA1A, RABA2A, RABF2A and RABG2. In vitro, can prenylate PGGTI targets with the C-terminal Cys-aliphatic-aliphatic-X (CaaX) with leucine in the terminal position. Substrates with the C-terminal sequence -CSIL such as ARAC11/ROP1 or GG2/AGG2 are prenylated independently of REP and when the alpha subunit is associated with a beta subunit (RGTB1 or RGTB2). This chain is Geranylgeranyl transferase type-2 subunit alpha 1, found in Arabidopsis thaliana (Mouse-ear cress).